The following is a 1489-amino-acid chain: DNA-directed RNA polymerase subunit beta (1489 aa).

This sequence belongs to the RNA polymerase beta chain family. As to quaternary structure, the RNAP catalytic core consists of 2 alpha, 1 beta, 1 beta' and 1 omega subunit. When a sigma factor is associated with the core the holoenzyme is formed, which can initiate transcription.

The enzyme catalyses RNA(n) + a ribonucleoside 5'-triphosphate = RNA(n+1) + diphosphate. In terms of biological role, DNA-dependent RNA polymerase catalyzes the transcription of DNA into RNA using the four ribonucleoside triphosphates as substrates. This chain is DNA-directed RNA polymerase subunit beta, found in Koribacter versatilis (strain Ellin345).